Reading from the N-terminus, the 319-residue chain is Sliding-clamp-loader large subunit (319 aa).

ATP-binding positions include 12–15 (EQKY), isoleucine 24, 53–58 (GTGKTT), and arginine 205.

Belongs to the Tevenvirinae sliding-clamp-loader large subunit family. As to quaternary structure, the sliding-clamp-loader consists of 4 large subunits and 1 small subunit. Interacts with the sliding clamp; this interaction allows the sliding-clamp-loader to open the sliding clamp. Part of the replicase complex that includes the DNA polymerase, the polymerase clamp, the clamp loader complex, the single-stranded DNA binding protein, the primase, the helicase and the helicase assembly factor.

In terms of biological role, forms the sliding-clamp-loader together with the small subunit. Functions as an ATPase enzyme. The clamp loader holds the clamp in an open conformation and places it onto the DNA. 4 ATP molecules must bind to the sliding-clamp-loader before the latter can open the sliding clamp. ATP hydrolysis triggers the detachment of the sliding clamp from the sliding-clamp-loader, freeing the sliding clamp to track along DNA. In Enterobacteria phage T4 (Bacteriophage T4), this protein is Sliding-clamp-loader large subunit (44).